Here is a 142-residue protein sequence, read N- to C-terminus: Large ribosomal subunit protein uL13 (142 aa).

It belongs to the universal ribosomal protein uL13 family. Part of the 50S ribosomal subunit.

Its function is as follows. This protein is one of the early assembly proteins of the 50S ribosomal subunit, although it is not seen to bind rRNA by itself. It is important during the early stages of 50S assembly. In Pseudomonas fluorescens (strain ATCC BAA-477 / NRRL B-23932 / Pf-5), this protein is Large ribosomal subunit protein uL13.